The following is a 407-amino-acid chain: uncharacterized protein (407 aa).

Residues 1-290 lie on the Lumenal side of the membrane; sequence MPLNIIGTAL…SNSLRRVISN (290 aa). Aspartate 114, lysine 236, and serine 281 together coordinate NADP(+). The active-site Lowers pKa of active site Tyr is the lysine 236. A helical membrane pass occupies residues 291–311; it reads GSVVLLIILYCILLYPILWLF. Residues 312–407 lie on the Cytoplasmic side of the membrane; that stretch reads TKSGRRGDQS…KSQNKSRKDD (96 aa). Residues 361 to 390 adopt a coiled-coil conformation; the sequence is ELQKKLFDNTERDILQLEKKVAAKRNANKT. A disordered region spans residues 383–407; the sequence is AKRNANKTGNQNSKKKSQNKSRKDD. Basic residues predominate over residues 395–407; it reads SKKKSQNKSRKDD.

This sequence belongs to the short-chain dehydrogenases/reductases (SDR) family.

Its subcellular location is the endoplasmic reticulum membrane. Its function is as follows. May be involved in lipid metabolism. This is an uncharacterized protein from Saccharomyces cerevisiae (strain ATCC 204508 / S288c) (Baker's yeast).